A 215-amino-acid polypeptide reads, in one-letter code: Cytochrome b6 (215 aa).

Residues 32–52 form a helical membrane-spanning segment; it reads IFYCLGGITLTCFIIQVATGF. Residue Cys-35 coordinates heme c. Heme b is bound by residues His-86 and His-100. 3 consecutive transmembrane segments (helical) span residues 90 to 110, 116 to 136, and 186 to 206; these read ASMMVLMMILHVFRVYLTGGF, LTWVTGVILGVLTVSFGVTGY, and LHTFVLPLLTAVFMLMHFLMI. Residues His-187 and His-202 each coordinate heme b.

Belongs to the cytochrome b family. PetB subfamily. The 4 large subunits of the cytochrome b6-f complex are cytochrome b6, subunit IV (17 kDa polypeptide, PetD), cytochrome f and the Rieske protein, while the 4 small subunits are PetG, PetL, PetM and PetN. The complex functions as a dimer. The cofactor is heme b. It depends on heme c as a cofactor.

Its subcellular location is the plastid. The protein localises to the chloroplast thylakoid membrane. Component of the cytochrome b6-f complex, which mediates electron transfer between photosystem II (PSII) and photosystem I (PSI), cyclic electron flow around PSI, and state transitions. This Zygnema circumcarinatum (Green alga) protein is Cytochrome b6.